Here is a 273-residue protein sequence, read N- to C-terminus: Undecaprenyl-diphosphatase (273 aa).

The next 8 membrane-spanning stretches (helical) occupy residues 13–35, 45–65, 90–110, 116–136, 157–177, 190–210, 222–242, and 252–272; these read LGVVEGLTEFLPVSSTGHMIIVG, ANTFEVVIQLGSILAVVVMFW, LSLIHILLGMIPAVVMGLIFH, LFNPVNVMYALIVGGVLLIAA, AFVIGCFQCLALWPGFSRSGA, YAASEFSFLLAVPMMMGATVL, GDVPMFAVGFVMAFIVALIAI, and ISFIPFAIYRFIVAAAVYVVF.

The protein belongs to the UppP family.

The protein resides in the cell inner membrane. It catalyses the reaction di-trans,octa-cis-undecaprenyl diphosphate + H2O = di-trans,octa-cis-undecaprenyl phosphate + phosphate + H(+). In terms of biological role, catalyzes the dephosphorylation of undecaprenyl diphosphate (UPP). Confers resistance to bacitracin. The sequence is that of Undecaprenyl-diphosphatase from Klebsiella pneumoniae subsp. pneumoniae (strain ATCC 700721 / MGH 78578).